The primary structure comprises 395 residues: DNA polymerase IV (395 aa).

One can recognise a UmuC domain in the interval 7–187 (FFHVDIDAFF…LPLKDVWGVG (181 aa)). Positions 11 and 105 each coordinate Mg(2+). Glutamate 106 is a catalytic residue.

This sequence belongs to the DNA polymerase type-Y family. Monomer. Requires Mg(2+) as cofactor.

The protein resides in the cytoplasm. The enzyme catalyses DNA(n) + a 2'-deoxyribonucleoside 5'-triphosphate = DNA(n+1) + diphosphate. Its function is as follows. Poorly processive, error-prone DNA polymerase involved in untargeted mutagenesis. Copies undamaged DNA at stalled replication forks, which arise in vivo from mismatched or misaligned primer ends. These misaligned primers can be extended by PolIV. Exhibits no 3'-5' exonuclease (proofreading) activity. May be involved in translesional synthesis, in conjunction with the beta clamp from PolIII. The chain is DNA polymerase IV from Treponema denticola (strain ATCC 35405 / DSM 14222 / CIP 103919 / JCM 8153 / KCTC 15104).